A 696-amino-acid polypeptide reads, in one-letter code: Macrolide export ATP-binding/permease protein MacB (696 aa).

Positions 6–244 (IELKNIERYH…KPQNKRTFID (239 aa)) constitute an ABC transporter domain. 42-49 (GASGSGKS) provides a ligand contact to ATP. The tract at residues 254 to 287 (HNTEKLNRPNEKNNIDNDNKENNNGYNRNDNSFL) is disordered. A compositionally biased stretch (basic and acidic residues) spans 255–274 (NTEKLNRPNEKNNIDNDNKE). Over residues 275 to 284 (NNNGYNRNDN) the composition is skewed to low complexity. The next 4 membrane-spanning stretches (helical) occupy residues 324–344 (FLTM…IALG), 576–596 (IAFI…LVSV), 626–646 (MVSL…GGLF), and 659–679 (LSSF…FGYF).

Belongs to the ABC transporter superfamily. Macrolide exporter (TC 3.A.1.122) family. As to quaternary structure, homodimer. Part of the tripartite efflux system MacAB-TolC, which is composed of an inner membrane transporter, MacB, a periplasmic membrane fusion protein, MacA, and an outer membrane component, TolC. The complex forms a large protein conduit and can translocate molecules across both the inner and outer membranes. Interacts with MacA.

The protein resides in the cell inner membrane. Functionally, part of the tripartite efflux system MacAB-TolC. MacB is a non-canonical ABC transporter that contains transmembrane domains (TMD), which form a pore in the inner membrane, and an ATP-binding domain (NBD), which is responsible for energy generation. Confers resistance against macrolides. This chain is Macrolide export ATP-binding/permease protein MacB, found in Haemophilus ducreyi (strain 35000HP / ATCC 700724).